We begin with the raw amino-acid sequence, 248 residues long: Uridylate kinase (248 aa).

K15–G18 lines the ATP pocket. Residues G23–G28 are involved in allosteric activation by GTP. G57 provides a ligand contact to UMP. ATP is bound by residues G58 and R62. UMP is bound by residues D77 and T138–T145. T165, Y171, and D174 together coordinate ATP.

Belongs to the UMP kinase family. As to quaternary structure, homohexamer.

It localises to the cytoplasm. The enzyme catalyses UMP + ATP = UDP + ADP. Its pathway is pyrimidine metabolism; CTP biosynthesis via de novo pathway; UDP from UMP (UMPK route): step 1/1. Allosterically activated by GTP. Inhibited by UTP. Functionally, catalyzes the reversible phosphorylation of UMP to UDP. This Yersinia enterocolitica serotype O:8 / biotype 1B (strain NCTC 13174 / 8081) protein is Uridylate kinase.